The following is a 306-amino-acid chain: 4-diphosphocytidyl-2-C-methyl-D-erythritol kinase (306 aa).

Lys23 is an active-site residue. Residue 108-118 (PIAAGIGGGSA) participates in ATP binding. Residue Asp150 is part of the active site.

This sequence belongs to the GHMP kinase family. IspE subfamily.

The enzyme catalyses 4-CDP-2-C-methyl-D-erythritol + ATP = 4-CDP-2-C-methyl-D-erythritol 2-phosphate + ADP + H(+). It functions in the pathway isoprenoid biosynthesis; isopentenyl diphosphate biosynthesis via DXP pathway; isopentenyl diphosphate from 1-deoxy-D-xylulose 5-phosphate: step 3/6. Functionally, catalyzes the phosphorylation of the position 2 hydroxy group of 4-diphosphocytidyl-2C-methyl-D-erythritol. This chain is 4-diphosphocytidyl-2-C-methyl-D-erythritol kinase, found in Rhodopseudomonas palustris (strain BisB18).